The following is a 254-amino-acid chain: MSFTVIIPARFASSRLPGKPLADIAGKPMIQHVFEKALQSGASRVIIATDNENVADVAKNFGAEVCMTSVNHNSGTERLAEVVEKLAIPDNEIIVNIQGDEPLIPPVIVRQVADNLAKFNVNMASLAVKIHDAEELFNPNAVKVLTDKDGYVLYFSRSVIPYDRDQFMNLQNVQKVQLADAYLRHIGIYAYRAGFIKQYVQWAPTQLENLEKLEQLRVLYNGERIHVELAKEVPAVGVDTAEDLEKVRLILAKD.

Belongs to the KdsB family.

It is found in the cytoplasm. It catalyses the reaction 3-deoxy-alpha-D-manno-oct-2-ulosonate + CTP = CMP-3-deoxy-beta-D-manno-octulosonate + diphosphate. It functions in the pathway nucleotide-sugar biosynthesis; CMP-3-deoxy-D-manno-octulosonate biosynthesis; CMP-3-deoxy-D-manno-octulosonate from 3-deoxy-D-manno-octulosonate and CTP: step 1/1. It participates in bacterial outer membrane biogenesis; lipopolysaccharide biosynthesis. In terms of biological role, activates KDO (a required 8-carbon sugar) for incorporation into bacterial lipopolysaccharide in Gram-negative bacteria. The protein is 3-deoxy-manno-octulosonate cytidylyltransferase of Haemophilus influenzae (strain PittEE).